A 199-amino-acid polypeptide reads, in one-letter code: GTP cyclohydrolase 1 (199 aa).

3 residues coordinate Zn(2+): C89, H92, and C161.

It belongs to the GTP cyclohydrolase I family. Homomer.

It carries out the reaction GTP + H2O = 7,8-dihydroneopterin 3'-triphosphate + formate + H(+). It functions in the pathway cofactor biosynthesis; 7,8-dihydroneopterin triphosphate biosynthesis; 7,8-dihydroneopterin triphosphate from GTP: step 1/1. This chain is GTP cyclohydrolase 1, found in Bifidobacterium longum (strain DJO10A).